We begin with the raw amino-acid sequence, 376 residues long: Cysteine synthase 1 (376 aa).

A mitochondrion-targeting transit peptide spans 1–16 (MFRHGVRTFATTSLRR). N6-(pyridoxal phosphate)lysine is present on Lys79. Residues Asn109, 215–219 (GTGGT), and Ser314 contribute to the pyridoxal 5'-phosphate site.

Belongs to the cysteine synthase/cystathionine beta-synthase family. Pyridoxal 5'-phosphate is required as a cofactor.

It is found in the mitochondrion. The catalysed reaction is O-succinyl-L-serine + hydrogen sulfide = L-cysteine + succinate. It catalyses the reaction O-acetyl-L-serine + hydrogen sulfide = L-cysteine + acetate. Its pathway is amino-acid biosynthesis; L-cysteine biosynthesis; L-cysteine from L-serine: step 2/2. In terms of biological role, catalyzes the conversion of O-succinyl-L-serine into cysteine, the last step in the cysteine biosynthesis pathway. Can also use O-acetyl-L-serine. The sequence is that of Cysteine synthase 1 (cys-17) from Neurospora crassa (strain ATCC 24698 / 74-OR23-1A / CBS 708.71 / DSM 1257 / FGSC 987).